Reading from the N-terminus, the 539-residue chain is GMP synthase [glutamine-hydrolyzing] (539 aa).

The Glutamine amidotransferase type-1 domain occupies 4–202 (KILILDFGSQ…VLGIAGCKPD (199 aa)). Cysteine 81 functions as the Nucleophile in the catalytic mechanism. Catalysis depends on residues histidine 176 and glutamate 178. The GMPS ATP-PPase domain occupies 203–395 (WVMRDHIEEA…LGLPPEMVYR (193 aa)). An ATP-binding site is contributed by 230–236 (SGGVDSS).

As to quaternary structure, homodimer.

The catalysed reaction is XMP + L-glutamine + ATP + H2O = GMP + L-glutamate + AMP + diphosphate + 2 H(+). It participates in purine metabolism; GMP biosynthesis; GMP from XMP (L-Gln route): step 1/1. Its function is as follows. Catalyzes the synthesis of GMP from XMP. The chain is GMP synthase [glutamine-hydrolyzing] from Cupriavidus necator (strain ATCC 17699 / DSM 428 / KCTC 22496 / NCIMB 10442 / H16 / Stanier 337) (Ralstonia eutropha).